Reading from the N-terminus, the 406-residue chain is Tryptophan 2,3-dioxygenase (406 aa).

A Phosphoserine modification is found at serine 19. Residues 72-76 and arginine 144 contribute to the substrate site; that span reads FIITH. A heme-binding site is contributed by histidine 328. Threonine 342 is a binding site for substrate.

Belongs to the tryptophan 2,3-dioxygenase family. Homotetramer. Dimer of dimers. Heme is required as a cofactor.

It carries out the reaction L-tryptophan + O2 = N-formyl-L-kynurenine. It participates in amino-acid degradation; L-tryptophan degradation via kynurenine pathway; L-kynurenine from L-tryptophan: step 1/2. Its function is as follows. Heme-dependent dioxygenase that catalyzes the oxidative cleavage of the L-tryptophan (L-Trp) pyrrole ring and converts L-tryptophan to N-formyl-L-kynurenine. Catalyzes the oxidative cleavage of the indole moiety. The polypeptide is Tryptophan 2,3-dioxygenase (Mus musculus (Mouse)).